The primary structure comprises 180 residues: Orotate phosphoribosyltransferase (180 aa).

Residues arginine 95, lysine 96, lysine 99, and 121–129 (EDVTTTGGS) each bind 5-phospho-alpha-D-ribose 1-diphosphate. The orotate site is built by threonine 125 and arginine 153.

It belongs to the purine/pyrimidine phosphoribosyltransferase family. PyrE subfamily. As to quaternary structure, homodimer. It depends on Mg(2+) as a cofactor.

It carries out the reaction orotidine 5'-phosphate + diphosphate = orotate + 5-phospho-alpha-D-ribose 1-diphosphate. The protein operates within pyrimidine metabolism; UMP biosynthesis via de novo pathway; UMP from orotate: step 1/2. In terms of biological role, catalyzes the transfer of a ribosyl phosphate group from 5-phosphoribose 1-diphosphate to orotate, leading to the formation of orotidine monophosphate (OMP). This Methanothermobacter thermautotrophicus (strain ATCC 29096 / DSM 1053 / JCM 10044 / NBRC 100330 / Delta H) (Methanobacterium thermoautotrophicum) protein is Orotate phosphoribosyltransferase.